Consider the following 381-residue polypeptide: MGVKGLNQLIKEHSPGAFKEFQLKNLFGRKVAIDASMCLYQFLIAVRQSDGQQLTNESGETTSHLSGMFYRTIRMVENNIKPVYVFDGKPPVLKGGELEKRLLKREEAQKQIDSIKDTGTVAEVMKFEKRLVRVSREQNDEAKKLLELMGIPYVNAPCEAEAQCAELARTGKVFAAASEDMDTLCYEPPYLLRHLTFAEARKMPINQITYSEAIAGLEMTKPQFIDMCILLGCDYCETIKGVGPVTAYKLIKEHGSLEKIIEHINSNPTSKYKVPENWPYDEARQLFMDPEVTKGEEVTLKWKEPDVEGLIQYMVREKGFSEDRIRSGAEKLKKGLKTGVQGRLDGFFSVVAKPGAKAGDKKGDKKRGSDSKASNNKKKRK.

The N-domain stretch occupies residues 1–105; sequence MGVKGLNQLI…GELEKRLLKR (105 aa). Asp34 is a Mg(2+) binding site. DNA contacts are provided by Arg47 and Arg71. Mg(2+) is bound by residues Asp87, Glu159, Glu161, Asp180, and Asp182. Residues 123–254 form an I-domain region; sequence EVMKFEKRLV…VTAYKLIKEH (132 aa). Glu159 lines the DNA pocket. 2 residues coordinate DNA: Gly232 and Asp234. Mg(2+) is bound at residue Asp234. An interaction with PCNA region spans residues 340–348; that stretch reads VQGRLDGFF. The tract at residues 354–381 is disordered; that stretch reads PGAKAGDKKGDKKRGSDSKASNNKKKRK. Over residues 358–370 the composition is skewed to basic and acidic residues; that stretch reads AGDKKGDKKRGSD.

It belongs to the XPG/RAD2 endonuclease family. FEN1 subfamily. Interacts with PCNA. Three molecules of FEN1 bind to one PCNA trimer with each molecule binding to one PCNA monomer. PCNA stimulates the nuclease activity without altering cleavage specificity. Requires Mg(2+) as cofactor. Phosphorylated. Phosphorylation upon DNA damage induces relocalization to the nuclear plasma.

The protein resides in the nucleus. Its subcellular location is the nucleolus. It localises to the nucleoplasm. It is found in the mitochondrion. In terms of biological role, structure-specific nuclease with 5'-flap endonuclease and 5'-3' exonuclease activities involved in DNA replication and repair. During DNA replication, cleaves the 5'-overhanging flap structure that is generated by displacement synthesis when DNA polymerase encounters the 5'-end of a downstream Okazaki fragment. It enters the flap from the 5'-end and then tracks to cleave the flap base, leaving a nick for ligation. Also involved in the long patch base excision repair (LP-BER) pathway, by cleaving within the apurinic/apyrimidinic (AP) site-terminated flap. Acts as a genome stabilization factor that prevents flaps from equilibrating into structures that lead to duplications and deletions. Also possesses 5'-3' exonuclease activity on nicked or gapped double-stranded DNA, and exhibits RNase H activity. Also involved in replication and repair of rDNA and in repairing mitochondrial DNA. The chain is Flap endonuclease 1 from Scheffersomyces stipitis (strain ATCC 58785 / CBS 6054 / NBRC 10063 / NRRL Y-11545) (Yeast).